A 505-amino-acid polypeptide reads, in one-letter code: ATP synthase subunit alpha (505 aa).

169–176 contributes to the ATP binding site; that stretch reads GDRQTGKT.

The protein belongs to the ATPase alpha/beta chains family. F-type ATPases have 2 components, CF(1) - the catalytic core - and CF(0) - the membrane proton channel. CF(1) has five subunits: alpha(3), beta(3), gamma(1), delta(1), epsilon(1). CF(0) has three main subunits: a(1), b(2) and c(9-12). The alpha and beta chains form an alternating ring which encloses part of the gamma chain. CF(1) is attached to CF(0) by a central stalk formed by the gamma and epsilon chains, while a peripheral stalk is formed by the delta and b chains.

Its subcellular location is the cell membrane. It catalyses the reaction ATP + H2O + 4 H(+)(in) = ADP + phosphate + 5 H(+)(out). Its function is as follows. Produces ATP from ADP in the presence of a proton gradient across the membrane. The alpha chain is a regulatory subunit. This chain is ATP synthase subunit alpha, found in Alkaliphilus oremlandii (strain OhILAs) (Clostridium oremlandii (strain OhILAs)).